The sequence spans 50 residues: MGQKWKLYIVKDGKVIRKNKFCPRCGPGVFMADHGDRWACGKCGYTEWKR.

Zn(2+) contacts are provided by Cys-22, Cys-25, Cys-40, and Cys-43. The C4-type zinc-finger motif lies at 22-43 (CPRCGPGVFMADHGDRWACGKC).

Belongs to the eukaryotic ribosomal protein eS31 family. In terms of assembly, part of the 30S ribosomal subunit. The cofactor is Zn(2+).

In Pyrococcus horikoshii (strain ATCC 700860 / DSM 12428 / JCM 9974 / NBRC 100139 / OT-3), this protein is Small ribosomal subunit protein eS31.